A 279-amino-acid polypeptide reads, in one-letter code: Ribosome maturation factor RimP (279 aa).

Residues 197-279 (LAEEGEPEEQ…GAPALRPTPK (83 aa)) are disordered. The segment covering 199–210 (EEGEPEEQEEGG) has biased composition (acidic residues).

The protein belongs to the RimP family.

The protein resides in the cytoplasm. Required for maturation of 30S ribosomal subunits. This chain is Ribosome maturation factor RimP, found in Methylocella silvestris (strain DSM 15510 / CIP 108128 / LMG 27833 / NCIMB 13906 / BL2).